The sequence spans 254 residues: 5-oxoprolinase subunit A (254 aa).

Belongs to the LamB/PxpA family. As to quaternary structure, forms a complex composed of PxpA, PxpB and PxpC.

It carries out the reaction 5-oxo-L-proline + ATP + 2 H2O = L-glutamate + ADP + phosphate + H(+). In terms of biological role, catalyzes the cleavage of 5-oxoproline to form L-glutamate coupled to the hydrolysis of ATP to ADP and inorganic phosphate. The chain is 5-oxoprolinase subunit A from Burkholderia ambifaria (strain MC40-6).